Reading from the N-terminus, the 1293-residue chain is MTMGLWLKLLAFGFALLDTEVFVTGQTPTPSDELSTTENALLLPQSDPLPARTTESTPPSISERGNGSSETTYHPGVLSTLLPHLSPQPDSQTPSAGGADTQTFSSQADNPTLTPAPGGGTDPPGVPGERTVPGTIPADTAFPVDTPSLARNSSAASPTHTSNVSTTDISSGASLTTLTPSTLGLASTDPPSTTIATTTKQTCAAMFGNITVNYTYESSNQTFKADLKDVQNAKCGNEDCENVLNNLEECSQIKNISVSNDSCAPATTIDLYVPPGTDKFSLHDCTPKEKANTSICLEWKTKNLDFRKCNSDNISYVLHCEPENNTKCIRRNTFIPERCQLDNLRAQTNYTCVAEILYRGVKLVKNVINVQTDLGIPETPKPSCGDPAARKTLVSWPEPVSKPESASKPHGYVLCYKNNSEKCKSLPNNVTSFEVESLKPYKYYEVSLLAYVNGKIQRNGTAEKCNFHTKADRPDKVNGMKTSRPTDNSINVTCGPPYETNGPKTFYILVVRSGGSFVTKYNKTNCQFYVDNLYYSTDYEFLVSFHNGVYEGDSVIRNESTNFNAKALIIFLVFLIIVTSIALLVVLYKIYDLRKKRSSNLDEQQELVERDDEKQLMDVEPIHSDILLETYKRKIADEGRLFLAEFQSIPRVFSKFPIKDARKPHNQNKNRYVDILPYDYNRVELSEINGDAGSTYINASYIDGFKEPRKYIAAQGPRDETVDDFWRMIWEQKATVIVMVTRCEEGNRNKCAEYWPSMEEGTRAFKDIVVTINDHKRCPDYIIQKLNVAHKKEKATGREVTHIQFTSWPDHGVPEDPHLLLKLRRRVNAFSNFFSGPIVVHCSAGVGRTGTYIGIDAMLEGLEAEGKVDVYGYVVKLRRQRCLMVQVEAQYILIHQALVEYNQFGETEVNLSELHSCLHNMKKRDPPSDPSPLEAEYQRLPSYRSWRTQHIGNQEENKKKNRNSNVVPYDFNRVPLKHELEMSKESEPESDESSDDDSDSEETSKYINASFVMSYWKPEMMIAAQGPLKETIGDFWQMIFQRKVKVIVMLTELVNGDQEVCAQYWGEGKQTYGDMEVEMKDTNRASAYTLRTFELRHSKRKEPRTVYQYQCTTWKGEELPAEPKDLVSMIQDLKQKLPKASPEGMKYHKHASILVHCRDGSQQTGLFCALFNLLESAETEDVVDVFQVVKSLRKARPGVVCSYEQYQFLYDIIASIYPAQNGQVKKTNSQDKIEFHNEVDGGKQDANCVRPDGPLNKAQEDSRGVGTPEPTNSAEEPEHAANGSASPAPTQSS.

The signal sequence occupies residues 1 to 25; sequence MTMGLWLKLLAFGFALLDTEVFVTG. Residues 26–566 lie on the Extracellular side of the membrane; sequence QTPTPSDELS…RNESTNFNAK (541 aa). The segment at 43–174 is disordered; that stretch reads LPQSDPLPAR…STTDISSGAS (132 aa). 3 stretches are compositionally biased toward polar residues: residues 53 to 72, 88 to 110, and 149 to 169; these read TTESTPPSISERGNGSSETT, QPDSQTPSAGGADTQTFSSQADN, and LARNSSAASPTHTSNVSTTDI. N-linked (GlcNAc...) asparagine glycosylation occurs at Asn66. Asn152, Asn163, Asn209, Asn213, Asn220, Asn255, Asn260, Asn292, Asn313, Asn324, Asn349, Asn418, Asn429, Asn459, and Asn491 each carry an N-linked (GlcNAc...) asparagine glycan. Fibronectin type-III domains are found at residues 376–472 and 473–568; these read IPET…TKAD and RPDK…AKAL. A helical membrane pass occupies residues 567 to 588; that stretch reads ALIIFLVFLIIVTSIALLVVLY. At 589–1293 the chain is on the cytoplasmic side; that stretch reads KIYDLRKKRS…SASPAPTQSS (705 aa). Tyrosine-protein phosphatase domains lie at 642–901 and 933–1216; these read FLAE…LVEY and LEAE…IASI. At Tyr672 the chain carries Phosphotyrosine. Substrate-binding positions include Asp810, 842 to 848, and Gln886; that span reads CSAGVGR. Cys842 serves as the catalytic Phosphocysteine intermediate. Phosphoserine occurs at positions 964, 983, 986, 990, 993, 994, and 998. The segment at 980 to 1003 is disordered; sequence LEMSKESEPESDESSDDDSDSEET. Over residues 988-1001 the composition is skewed to acidic residues; it reads PESDESSDDDSDSE. Cys1157 acts as the Phosphocysteine intermediate in catalysis. The residue at position 1229 (Ser1229) is a Phosphoserine. The disordered stretch occupies residues 1240–1293; it reads DGGKQDANCVRPDGPLNKAQEDSRGVGTPEPTNSAEEPEHAANGSASPAPTQSS. Residue Thr1267 is modified to Phosphothreonine. The span at 1283–1293 shows a compositional bias: polar residues; the sequence is GSASPAPTQSS. Ser1286 carries the phosphoserine modification.

This sequence belongs to the protein-tyrosine phosphatase family. Receptor class 1/6 subfamily. Interacts with SKAP1. Interacts with DPP4; the interaction is enhanced in an interleukin-12-dependent manner in activated lymphocytes. Binds GANAB and PRKCSH. Interacts with CD53; this interaction stabilizes PTPRC on the membrane and is required for optimal phosphatase activity. Interacts with CLEC10A. Post-translationally, heavily N- and O-glycosylated.

The protein resides in the cell membrane. Its subcellular location is the membrane raft. It is found in the synapse. The enzyme catalyses O-phospho-L-tyrosyl-[protein] + H2O = L-tyrosyl-[protein] + phosphate. Protein tyrosine-protein phosphatase required for T-cell activation through the antigen receptor. Acts as a positive regulator of T-cell coactivation upon binding to DPP4. The first PTPase domain has enzymatic activity, while the second one seems to affect the substrate specificity of the first one. Upon T-cell activation, recruits and dephosphorylates SKAP1 and FYN. Dephosphorylates LYN, and thereby modulates LYN activity. Interacts with CLEC10A at antigen presenting cell-T cell contact; CLEC10A on immature dendritic cells recognizes Tn antigen-carrying PTPRC/CD45 receptor on effector T cells and modulates T cell activation threshold to limit autoreactivity. The sequence is that of Receptor-type tyrosine-protein phosphatase C from Mus musculus (Mouse).